The primary structure comprises 179 residues: Probable chorismate pyruvate-lyase (179 aa).

Substrate-binding residues include arginine 82, leucine 120, and glutamate 165.

It belongs to the UbiC family.

It localises to the cytoplasm. It carries out the reaction chorismate = 4-hydroxybenzoate + pyruvate. It participates in cofactor biosynthesis; ubiquinone biosynthesis. Its function is as follows. Removes the pyruvyl group from chorismate, with concomitant aromatization of the ring, to provide 4-hydroxybenzoate (4HB) for the ubiquinone pathway. This is Probable chorismate pyruvate-lyase from Vibrio vulnificus (strain CMCP6).